We begin with the raw amino-acid sequence, 1499 residues long: Collagen alpha-2(V) chain (1499 aa).

Residues 1–26 (MMANWAEARPLLILIVLLGQFVSIKA) form the signal peptide. The region spanning 39-97 (IACTQNGQMYLNRDIWKPAPCQICVCDNGAILCDKIECQDVLDCADPVTPPGECCPVCS) is the VWFC domain. Residues 104–1268 (NTNFGRGRKG…DDKNKTDPGV (1165 aa)) form a disordered region. Positions 170–182 (PGAPGPPGHPSHP) are enriched in pro residues. The span at 212 to 227 (PGSVGPVGPRGPQGLQ) shows a compositional bias: low complexity. Over residues 236 to 248 (TGPPGEPGDPGPM) the composition is skewed to pro residues. Hydroxyproline is present on residues P290, P293, and P296. 2 stretches are compositionally biased toward low complexity: residues 322 to 340 (EAGPTGPMGAMGPLGPRGM) and 427 to 443 (TPGAKGPTGSPGTSGPP). The Cell attachment site motif lies at 506–508 (RGD). 2 stretches are compositionally biased toward low complexity: residues 604–626 (SIGIRGQPGSMGLPGPKGSSGDP) and 694–709 (DQGVPGDPGAVGPLGP). 2 positions are modified to hydroxyproline: P611 and P617. Positions 710–721 (RGERGNPGERGE) are enriched in basic and acidic residues. Residues 732-741 (GMAGGHGPDG) show a composition bias toward gly residues. A compositionally biased stretch (low complexity) spans 742–758 (PKGSPGPSGTPGDTGPP). The span at 776–787 (KGDRGGIGEKGA) shows a compositional bias: basic and acidic residues. The span at 826-841 (PPGSRGNPGSRGENGP) shows a compositional bias: low complexity. Positions 894 to 903 (GLKGGRGTQG) are enriched in gly residues. Residue P919 is modified to 3-hydroxyproline; partial. The span at 919–929 (PPGPAGAPGPA) shows a compositional bias: pro residues. 6 short sequence motifs (cell attachment site) span residues 944–946 (RGD), 1067–1069 (RGD), 1070–1072 (RGD), 1100–1102 (RGD), 1127–1129 (RGD), and 1136–1138 (RGD). Over residues 1063-1072 (AVGERGDRGD) the composition is skewed to basic and acidic residues. Low complexity predominate over residues 1093–1114 (APGDAGQRGDPGSRGPIGPPGR). The segment covering 1127–1141 (RGDKGDHGDRGDRGQ) has biased composition (basic and acidic residues). P1156 carries the 3-hydroxyproline; partial modification. 2 stretches are compositionally biased toward pro residues: residues 1171–1181 (PFGPRGPPGPV) and 1211–1226 (EGPPGEPGPPGPPGPP). The propeptide at 1230–1499 (TAALGDIMGH…GVEIGPVCFV (270 aa)) is C-terminal propeptide. The N-linked (GlcNAc...) asparagine glycan is linked to N1262. Residues 1266 to 1499 (PGVHATLKSL…GVEIGPVCFV (234 aa)) form the Fibrillar collagen NC1 domain. Intrachain disulfides connect C1296–C1328, C1336–C1497, and C1405–C1450. Residues D1314, N1316, Q1317, and D1322 each coordinate Ca(2+). N1400 carries an N-linked (GlcNAc...) asparagine glycan.

It belongs to the fibrillar collagen family. As to quaternary structure, trimers of two alpha 1(V) and one alpha 2(V) chains in most tissues and trimers of one alpha 1(V), one alpha 2(V), and one alpha 3(V) chains in placenta. Prolines at the third position of the tripeptide repeating unit (G-X-P) are hydroxylated in some or all of the chains. Probably 3-hydroxylated on Pro-919 and Pro-1156 by LEPREL1.

It is found in the secreted. It localises to the extracellular space. The protein resides in the extracellular matrix. Its function is as follows. Type V collagen is a member of group I collagen (fibrillar forming collagen). It is a minor connective tissue component of nearly ubiquitous distribution. Type V collagen binds to DNA, heparan sulfate, thrombospondin, heparin, and insulin. Type V collagen is a key determinant in the assembly of tissue-specific matrices. This Homo sapiens (Human) protein is Collagen alpha-2(V) chain (COL5A2).